The sequence spans 351 residues: Histidine protein kinase SaeS (351 aa).

2 helical membrane-spanning segments follow: residues 9–29 (IIIG…IAYI) and 40–60 (TLTL…SIFI). An HAMP domain is found at 61–114 (NPLIQKIKQFNIKTKQFANGNYASNDKTFNSPKEIYELNQSFNKMASEITQQMN). Residues 129–348 (NLAHDLKTPL…TMTVTLHKLD (220 aa)) enclose the Histidine kinase domain. Histidine 132 carries the phosphohistidine; by autocatalysis modification.

In terms of processing, autophosphorylated.

It localises to the cell membrane. The catalysed reaction is ATP + protein L-histidine = ADP + protein N-phospho-L-histidine.. Member of the two-component regulatory system SaeR/SaeS involved in the regulation of staphylococcal virulence factors in a strain-dependent fashion. Probably functions as a membrane-associated protein kinase that upon sensing the appropriate signal, autophosphorylates and in turn activates the cytosolic response regulator SaeR. The polypeptide is Histidine protein kinase SaeS (saeS) (Staphylococcus aureus (strain bovine RF122 / ET3-1)).